The following is a 530-amino-acid chain: Phosphoenolpyruvate carboxykinase (ATP) (530 aa).

Positions 60, 195, and 201 each coordinate substrate. ATP contacts are provided by residues Lys201, His221, and 237-245 (GLSGTGKTT). Residues Lys201 and His221 each contribute to the Mn(2+) site. Asp258 contacts Mn(2+). Residues Glu286, Arg324, and Ser449 each coordinate ATP. Arg324 contacts substrate.

This sequence belongs to the phosphoenolpyruvate carboxykinase (ATP) family. Mn(2+) serves as cofactor.

It is found in the cytoplasm. The catalysed reaction is oxaloacetate + ATP = phosphoenolpyruvate + ADP + CO2. Its pathway is carbohydrate biosynthesis; gluconeogenesis. In terms of biological role, involved in the gluconeogenesis. Catalyzes the conversion of oxaloacetate (OAA) to phosphoenolpyruvate (PEP) through direct phosphoryl transfer between the nucleoside triphosphate and OAA. The sequence is that of Phosphoenolpyruvate carboxykinase (ATP) from Geotalea uraniireducens (strain Rf4) (Geobacter uraniireducens).